The primary structure comprises 383 residues: Neuropeptide Y receptor type 1 (383 aa).

The Extracellular segment spans residues 1–34 (MNSTSFSQLENHSVHYNLSEEKPSFFAFENDDCH). N-linked (GlcNAc...) asparagine glycans are attached at residues asparagine 2, asparagine 11, and asparagine 17. A helical membrane pass occupies residues 35–55 (LPLAVIFTLALAYGAVIILGV). At 56–87 (SGNLALILIILKQKEMRNVTNILIVNLSFSDL) the chain is on the cytoplasmic side. Residues 88–108 (LVAIMCLPFTFVYTLMDHWIF) traverse the membrane as a helical segment. Over 109 to 116 (GEIMCKLN) the chain is Extracellular. A disulfide bond links cysteine 113 and cysteine 198. Residues 117–137 (PFVQCVSITVSIFSLVLIAVE) traverse the membrane as a helical segment. Topologically, residues 138–154 (RHQLIINPRGWRPNNRH) are cytoplasmic. The helical transmembrane segment at 155–175 (AYIGIAVIWVLAVASSLPFMI) threads the bilayer. The Extracellular portion of the chain corresponds to 176–211 (YQVLTDEPFQNVTLDAFKDKLVCFDQFPSDSHRLSY). The helical transmembrane segment at 212–232 (TTLLLVLQYFGPLCFIFICYF) threads the bilayer. Over 233–260 (KIYIRLKRRNNMMDKMRDSKYRSSESKR) the chain is Cytoplasmic. The chain crosses the membrane as a helical span at residues 261–281 (INIMLLSIVVAFAVCWLPLTI). Over 282 to 299 (FNTVFDWNHQIIATCNHN) the chain is Extracellular. A helical membrane pass occupies residues 300-320 (LLFLLCHLTAMISTCVNPIFY). Residues 321–383 (GFLNKNFQRD…KISCVENEKI (63 aa)) are Cytoplasmic-facing. Cysteine 338 is lipidated: S-palmitoyl cysteine. Residues serine 368 and serine 376 each carry the phosphoserine modification.

Belongs to the G-protein coupled receptor 1 family.

It localises to the cell membrane. Its function is as follows. Receptor for neuropeptide Y and peptide YY. The chain is Neuropeptide Y receptor type 1 (NPY1R) from Cavia porcellus (Guinea pig).